Here is a 288-residue protein sequence, read N- to C-terminus: GTP-binding protein 8 (288 aa).

An EngB-type G domain is found at 109-282 (HRPEVCFIGR…RCFIADITGN (174 aa)). GTP is bound by residues 117-124 (GRSNVGKS), 146-150 (GHTKK), 164-167 (DMPG), 226-229 (TKID), and 261-263 (VSA). Positions 124 and 148 each coordinate Mg(2+).

Belongs to the TRAFAC class TrmE-Era-EngA-EngB-Septin-like GTPase superfamily. EngB GTPase family. It depends on Mg(2+) as a cofactor.

The chain is GTP-binding protein 8 (GTPBP8) from Bos taurus (Bovine).